We begin with the raw amino-acid sequence, 334 residues long: Biotin synthase (334 aa).

A Radical SAM core domain is found at 55-285 (GSSGSIHACS…VHPRKIIKIA (231 aa)). Positions 73, 77, and 80 each coordinate [4Fe-4S] cluster. Cys-152, Cys-213, and Lys-283 together coordinate [2Fe-2S] cluster.

It belongs to the radical SAM superfamily. Biotin synthase family. Homodimer. The cofactor is [4Fe-4S] cluster. Requires [2Fe-2S] cluster as cofactor.

The enzyme catalyses (4R,5S)-dethiobiotin + (sulfur carrier)-SH + 2 reduced [2Fe-2S]-[ferredoxin] + 2 S-adenosyl-L-methionine = (sulfur carrier)-H + biotin + 2 5'-deoxyadenosine + 2 L-methionine + 2 oxidized [2Fe-2S]-[ferredoxin]. It functions in the pathway cofactor biosynthesis; biotin biosynthesis; biotin from 7,8-diaminononanoate: step 2/2. Its function is as follows. Catalyzes the conversion of dethiobiotin (DTB) to biotin by the insertion of a sulfur atom into dethiobiotin via a radical-based mechanism. This Chlorobium phaeobacteroides (strain DSM 266 / SMG 266 / 2430) protein is Biotin synthase.